The following is a 211-amino-acid chain: Cytochrome c biogenesis ATP-binding export protein CcmA (211 aa).

The ABC transporter domain occupies 8–210 (LEAKNLQCER…EVRRIQLGAV (203 aa)). 40-47 (GPNGAGKT) serves as a coordination point for ATP.

Belongs to the ABC transporter superfamily. CcmA exporter (TC 3.A.1.107) family. The complex is composed of two ATP-binding proteins (CcmA) and two transmembrane proteins (CcmB).

It localises to the cell inner membrane. It carries out the reaction heme b(in) + ATP + H2O = heme b(out) + ADP + phosphate + H(+). Part of the ABC transporter complex CcmAB involved in the biogenesis of c-type cytochromes; once thought to export heme, this seems not to be the case, but its exact role is uncertain. Responsible for energy coupling to the transport system. The protein is Cytochrome c biogenesis ATP-binding export protein CcmA of Hahella chejuensis (strain KCTC 2396).